Reading from the N-terminus, the 336-residue chain is MAAAVRCLRRVLIHHQRHCLCKMASQASLYPCSVNSLLHNRHFAAAAAAATKPARKIKKGAKEKTSDEKPVDDIEKIKSYTYMESDPEDDVYLKRLYPRRIYEVEKAIHLLKKFQVLDFTNPKQGVYLDLTLDMALGKKKTVEPFASVIALPHLFSSEVNKVAVFTANASEIKIAEENGAAFAGGTDLVKKIMDDEVVVDFYVAVPEIMGELNPLRKKLKKRFPKATRNSIGRDIPKMLELFKTAHEIMVDEERQNFLSTKIATLDMPSDQIAANLQAVINEVCKHRPLNLGPFVVRAFLRSSTSEGLLLKTDSLLPKEAKTTEAETEETQTAEAA.

The N-terminal 50 residues, 1–50 (MAAAVRCLRRVLIHHQRHCLCKMASQASLYPCSVNSLLHNRHFAAAAAAA), are a transit peptide targeting the mitochondrion. Position 85 is a phosphoserine (Ser-85).

Belongs to the universal ribosomal protein uL1 family.

The protein localises to the mitochondrion. The polypeptide is Large ribosomal subunit protein uL1m (Mrpl1) (Mus musculus (Mouse)).